The primary structure comprises 515 residues: MPLSWLLPFSAMELLLTATIFYLVLWVVKAFRLQVPKGLKSPPGPWGWPLIGHVLTLGKNPHLALTRLSARYGDVLQIRIGSTPVVVLSGLDTIRQALVRQSDDFKGRPDLYSSTFISDGQSMIFNPDSGPVWAARRRLAQSALQSFSVASDPASVSSCYLEEHVSREAEHLVTKLLDLMAGPGCFEPSSQIVGSVANVIGAMCFGKNFPQTSEEMLQIVNTSKEFTEFASSGNPVDFFPILRYLPNPMLQQFKDFNKRFLQFLQKTVQEHYQDFDKNHVQDIASALFKHSEESPHVNGDLIPRKKIVNLVNDIFGAGFDTVTTAISWSLLYLVTKPEIQKKIHKELDAVIGRDRKPRLADRPQLPYMEAFILEVFRYSSFLPFTIPHCTTRDTILNGFYIPKDRCVFINQWQVNHDPKQWEDPFEFRPERFLLANNTAVDKTLSDKILLFGLGKRRCIGETLGRWEVFLFLAILLQQLEFSVPPGVKVDLTPVYGLTMKPPHCQHVQARPRFSK.

A glycan (O-linked (GlcNAc) serine) is linked at S69. A substrate-binding site is contributed by F226. C458 lines the heme pocket.

This sequence belongs to the cytochrome P450 family. Interacts with PGRMC1; the interaction requires PGRMC1 homodimerization. Heme is required as a cofactor.

The protein resides in the endoplasmic reticulum membrane. Its subcellular location is the microsome membrane. It carries out the reaction an organic molecule + reduced [NADPH--hemoprotein reductase] + O2 = an alcohol + oxidized [NADPH--hemoprotein reductase] + H2O + H(+). The enzyme catalyses 17beta-estradiol + reduced [NADPH--hemoprotein reductase] + O2 = 2-hydroxy-17beta-estradiol + oxidized [NADPH--hemoprotein reductase] + H2O + H(+). It catalyses the reaction 17beta-estradiol + reduced [NADPH--hemoprotein reductase] + O2 = 4-hydroxy-17beta-estradiol + oxidized [NADPH--hemoprotein reductase] + H2O + H(+). The catalysed reaction is estrone + reduced [NADPH--hemoprotein reductase] + O2 = 2-hydroxyestrone + oxidized [NADPH--hemoprotein reductase] + H2O + H(+). It carries out the reaction estrone + reduced [NADPH--hemoprotein reductase] + O2 = 4-hydroxyestrone + oxidized [NADPH--hemoprotein reductase] + H2O + H(+). The enzyme catalyses cholesterol + reduced [NADPH--hemoprotein reductase] + O2 = 25-hydroxycholesterol + oxidized [NADPH--hemoprotein reductase] + H2O + H(+). It catalyses the reaction all-trans-retinol + reduced [NADPH--hemoprotein reductase] + O2 = all-trans-retinal + oxidized [NADPH--hemoprotein reductase] + 2 H2O + H(+). The catalysed reaction is all-trans-retinal + reduced [NADPH--hemoprotein reductase] + O2 = all-trans-retinoate + oxidized [NADPH--hemoprotein reductase] + H2O + 2 H(+). It carries out the reaction (5Z,8Z,11Z,14Z)-eicosatetraenoate + reduced [NADPH--hemoprotein reductase] + O2 = (14R,15S)-epoxy-(5Z,8Z,11Z)-eicosatrienoate + oxidized [NADPH--hemoprotein reductase] + H2O + H(+). The enzyme catalyses (5Z,8Z,11Z,14Z)-eicosatetraenoate + reduced [NADPH--hemoprotein reductase] + O2 = (14S,15R)-epoxy-(5Z,8Z,11Z)-eicosatrienoate + oxidized [NADPH--hemoprotein reductase] + H2O + H(+). It catalyses the reaction (5Z,8Z,11Z,14Z,17Z)-eicosapentaenoate + reduced [NADPH--hemoprotein reductase] + O2 = (17R,18S)-epoxy-(5Z,8Z,11Z,14Z)-eicosatetraenoate + oxidized [NADPH--hemoprotein reductase] + H2O + H(+). The catalysed reaction is (4Z,7Z,10Z,13Z,16Z,19Z)-docosahexaenoate + reduced [NADPH--hemoprotein reductase] + O2 = (19R,20S)-epoxy-(4Z,7Z,10Z,13Z,16Z)-docosapentaenoate + oxidized [NADPH--hemoprotein reductase] + H2O + H(+). It carries out the reaction (5S)-hydroperoxy-(6E,8Z,11Z,14Z)-eicosatetraenoate = 5-oxo-(6E,8Z,11Z,14Z)-eicosatetraenoate + H2O. The enzyme catalyses (12S)-hydroperoxy-(5Z,8Z,10E,14Z)-eicosatetraenoate = 12-oxo-(5Z,8Z,10E,14Z)-eicosatetraenoate + H2O. It catalyses the reaction (15S)-hydroperoxy-(5Z,8Z,11Z,13E)-eicosatetraenoate = 15-oxo-(5Z,8Z,11Z,13E)-eicosatetraenoate + H2O. The catalysed reaction is (13S)-hydroperoxy-(9Z,11E)-octadecadienoate = 13-oxo-(9Z,11E)-octadecadienoate + H2O. It carries out the reaction (5Z,8Z,11Z,14Z)-eicosatetraenoate + reduced [NADPH--hemoprotein reductase] + O2 = 13-hydroxy-(5Z,8Z,11Z,14Z)-eicosatetraenoate + oxidized [NADPH--hemoprotein reductase] + H2O + H(+). The enzyme catalyses (5Z,8Z,11Z,14Z)-eicosatetraenoate + reduced [NADPH--hemoprotein reductase] + O2 = 19-hydroxy-(5Z,8Z,11Z,14Z)-eicosatetraenoate + oxidized [NADPH--hemoprotein reductase] + H2O + H(+). It catalyses the reaction (9Z,12Z)-octadecadienoate + reduced [NADPH--hemoprotein reductase] + O2 = 11-hydroxy-(9Z,12Z)-octadecadienoate + oxidized [NADPH--hemoprotein reductase] + H2O + H(+). It functions in the pathway cofactor metabolism; retinol metabolism. The protein operates within steroid metabolism; cholesterol metabolism. It participates in lipid metabolism; arachidonate metabolism. Its function is as follows. A cytochrome P450 monooxygenase involved in the metabolism of various endogenous substrates, including fatty acids, steroid hormones and vitamins. Mechanistically, uses molecular oxygen inserting one oxygen atom into a substrate, and reducing the second into a water molecule, with two electrons provided by NADPH via cytochrome P450 reductase (NADPH--hemoprotein reductase). Catalyzes the hydroxylation of carbon-hydrogen bonds. Exhibits high catalytic activity for the formation of hydroxyestrogens from estrone (E1) and 17beta-estradiol (E2), namely 2-hydroxy E1 and E2. Metabolizes cholesterol toward 25-hydroxycholesterol, a physiological regulator of cellular cholesterol homeostasis. May act as a major enzyme for all-trans retinoic acid biosynthesis in the liver. Catalyzes two successive oxidative transformation of all-trans retinol to all-trans retinal and then to the active form all-trans retinoic acid. Primarily catalyzes stereoselective epoxidation of the last double bond of polyunsaturated fatty acids (PUFA), displaying a strong preference for the (R,S) stereoisomer. Catalyzes bisallylic hydroxylation and omega-1 hydroxylation of PUFA. May also participate in eicosanoids metabolism by converting hydroperoxide species into oxo metabolites (lipoxygenase-like reaction, NADPH-independent). Plays a role in the oxidative metabolism of xenobiotics. Catalyzes the N-hydroxylation of heterocyclic amines and the O-deethylation of phenacetin. Metabolizes caffeine via N3-demethylation. This is Cytochrome P450 1A2 (CYP1A2) from Cavia porcellus (Guinea pig).